A 362-amino-acid polypeptide reads, in one-letter code: Ciliary neurotrophic factor receptor subunit alpha (362 aa).

The N-terminal stretch at 1–19 is a signal peptide; it reads MANPVPSACCVVLAAVVVV. Positions 23-103 constitute an Ig-like C2-type domain; sequence RHSQQDSHIQ…HLKYQTYLRV (81 aa). A disulfide bond links Cys44 and Cys87. N-linked (GlcNAc...) asparagine glycans are attached at residues Asn58, Asn68, Asn140, and Asn188. 2 consecutive Fibronectin type-III domains span residues 106 to 203 and 204 to 304; these read PPKE…VKPD and PPES…TEEP. Positions 288–292 match the WSXWS motif motif; it reads WSDWS. Asp334 is lipidated: GPI-anchor amidated aspartate. The propeptide at 335 to 362 is removed in mature form; it reads KGAGVGSGAVAVCWTAGLVLAAYGVLFI.

This sequence belongs to the type I cytokine receptor family. Type 3 subfamily. Heterotrimer of the alpha subunit, LIFR and IL6ST. Highly expressed in nervous system. Also found in skeletal muscle.

It localises to the cell membrane. Binds to CNTF (GPA). The alpha subunit provides the receptor specificity. The sequence is that of Ciliary neurotrophic factor receptor subunit alpha (CNTFR) from Gallus gallus (Chicken).